The following is a 188-amino-acid chain: Cytidylate kinase (188 aa).

7-15 (GKIGSGKST) contributes to the ATP binding site.

The protein belongs to the cytidylate kinase family. Type 2 subfamily.

It localises to the cytoplasm. It catalyses the reaction CMP + ATP = CDP + ADP. The enzyme catalyses dCMP + ATP = dCDP + ADP. This Thermoplasma acidophilum (strain ATCC 25905 / DSM 1728 / JCM 9062 / NBRC 15155 / AMRC-C165) protein is Cytidylate kinase (cmk).